Consider the following 164-residue polypeptide: Large ribosomal subunit protein uL10 (164 aa).

The protein belongs to the universal ribosomal protein uL10 family. Part of the ribosomal stalk of the 50S ribosomal subunit. The N-terminus interacts with L11 and the large rRNA to form the base of the stalk. The C-terminus forms an elongated spine to which L12 dimers bind in a sequential fashion forming a multimeric L10(L12)X complex.

Forms part of the ribosomal stalk, playing a central role in the interaction of the ribosome with GTP-bound translation factors. The polypeptide is Large ribosomal subunit protein uL10 (Aliivibrio fischeri (strain MJ11) (Vibrio fischeri)).